A 380-amino-acid polypeptide reads, in one-letter code: Cytochrome b (380 aa).

The next 4 helical transmembrane spans lie at 34–54 (FGSL…LLAM), 78–99 (WLIR…YLHI), 114–134 (WNTG…GYVL), and 179–199 (FFAL…IHLT). Residues histidine 84 and histidine 98 each contribute to the heme b site. Residues histidine 183 and histidine 197 each coordinate heme b. Histidine 202 provides a ligand contact to a ubiquinone. The next 4 helical transmembrane spans lie at 227 to 247 (TKDL…AMFS), 289 to 309 (LGGV…PFLH), 321 to 341 (LSQL…WVGS), and 348 to 368 (FIII…ILFP).

It belongs to the cytochrome b family. The cytochrome bc1 complex contains 11 subunits: 3 respiratory subunits (MT-CYB, CYC1 and UQCRFS1), 2 core proteins (UQCRC1 and UQCRC2) and 6 low-molecular weight proteins (UQCRH/QCR6, UQCRB/QCR7, UQCRQ/QCR8, UQCR10/QCR9, UQCR11/QCR10 and a cleavage product of UQCRFS1). This cytochrome bc1 complex then forms a dimer. It depends on heme b as a cofactor.

The protein resides in the mitochondrion inner membrane. Its function is as follows. Component of the ubiquinol-cytochrome c reductase complex (complex III or cytochrome b-c1 complex) that is part of the mitochondrial respiratory chain. The b-c1 complex mediates electron transfer from ubiquinol to cytochrome c. Contributes to the generation of a proton gradient across the mitochondrial membrane that is then used for ATP synthesis. In Amazilia tzacatl (Rufous-tailed hummingbird), this protein is Cytochrome b (MT-CYB).